Here is a 360-residue protein sequence, read N- to C-terminus: MKATIIFLLLAQVSWAGPFQQRGLFDFMLEDEASGIGPEDRIHEVLDLEPLGPVCPFRCQCHLRVVQCSDLGLDKVPKDLPPDTTLLDLQNNKITEIKDGDFKNLKNLHALILVNNKISKISPGAFTPLVKLERLYLSKNHLKELPEKMPKTLQELRVHENEITKVRKAVFNGLNQMIVVELGTNPLKSSGIENGAFQGMKKLSYIRIADTNITTIPPGLPPSLTELHLDGNKITKVDAASLRGLNNLAKLGLSFNSISAVDNGSLANTPHLRELHLDNNKLIKVPGGLADHKYIQVVYLHNNNISAVGSNDFCPPGYNTKKASYSGVSLFSNPVQYWEIQPSTFRCVYVRSAIQLGNYK.

The first 16 residues, 1–16 (MKATIIFLLLAQVSWA), serve as a signal peptide directing secretion. Positions 17-30 (GPFQQRGLFDFMLE) are excised as a propeptide. An O-linked (Xyl...) (glycosaminoglycan) serine glycan is attached at serine 34. 2 cysteine pairs are disulfide-bonded: cysteine 55–cysteine 61 and cysteine 59–cysteine 68. LRR repeat units lie at residues 74 to 94 (DKVPKDLPPDTTLLDLQNNKI), 95 to 118 (TEIKDGDFKNLKNLHALILVNNKI), 119 to 142 (SKISPGAFTPLVKLERLYLSKNHL), 143 to 163 (KELPEKMPKTLQELRVHENEI), 164 to 187 (TKVRKAVFNGLNQMIVVELGTNPL), 188 to 213 (KSSGIENGAFQGMKKLSYIRIADTNI), 214 to 234 (TTIPPGLPPSLTELHLDGNKI), 235 to 258 (TKVDAASLRGLNNLAKLGLSFNSI), 259 to 282 (SAVDNGSLANTPHLRELHLDNNKL), 283 to 305 (IKVPGGLADHKYIQVVYLHNNNI), 306 to 335 (SAVGSNDFCPPGYNTKKASYSGVSLFSNPV), and 336 to 360 (QYWEIQPSTFRCVYVRSAIQLGNYK). N-linked (GlcNAc...) asparagine glycosylation is present at asparagine 212. N-linked (GlcNAc...) asparagine glycosylation is found at asparagine 263 and asparagine 304. Residues cysteine 314 and cysteine 347 are joined by a disulfide bond.

The protein belongs to the small leucine-rich proteoglycan (SLRP) family. SLRP class I subfamily. In terms of assembly, binds to type I and type II collagen, fibronectin and TGF-beta. Forms a ternary complex with MFAP2 and ELN. Interacts with DPT. Post-translationally, the attached glycosaminoglycan chain can be either chondroitin sulfate or dermatan sulfate depending upon the tissue of origin.

It localises to the secreted. Its subcellular location is the extracellular space. It is found in the extracellular matrix. Functionally, may affect the rate of fibrils formation. The protein is Decorin (DCN) of Equus caballus (Horse).